The sequence spans 561 residues: MRHCINCCIQLLPDGAHKQQVNCQGGPHHGHQACPTCKGENKILFRVDSKQMNLLAVLEVRTEGNENWGGFLRFKKGKRCSLVFGLIIMTLVMASYILSGAHQELLISSPFHYGGFPSNPSLMDSENPSDTKEHHHQSSVNNISYMKDYPSIKLIINSITTRIEFTTRQLPDLEDLKKQELHMFSVIPNKFLPNSKSPCWYEEFSGQNTTDPYLTNSYVLYSKRFRSTFDALRKAFWGHLAHAHGKHFRLRCLPHFYIIGQPKCGTTDLYDRLRLHPEVKFSAIKEPHWWTRKRFGIVRLRDGLRDRYPVEDYLDLFDLAAHQIHQGLQASSAKEQSKMNTIIIGEASASTMWDNNAWTFFYDNSTDGEPPFLTQDFIHAFQPNARLIVMLRDPVERLYSDYLYFASSNKSADDFHEKVTEALQLFENCMLDYSLRACVYNNTLNNAMPVRLQVGLYAVYLLDWLSVFDKQQFLILRLEDHASNVKYTMHKVFQFLNLGPLSEKQEALMTKSPASNARRPEDRNLGPMWPITQKILRDFYRPFNARLAQVLADEAFAWKTT.

At 1–80 (MRHCINCCIQ…FLRFKKGKRC (80 aa)) the chain is on the cytoplasmic side. Residues 81-101 (SLVFGLIIMTLVMASYILSGA) traverse the membrane as a helical; Signal-anchor for type II membrane protein segment. Residues 102 to 561 (HQELLISSPF…ADEAFAWKTT (460 aa)) are Lumenal-facing. Residue 263–267 (KCGTT) coordinates 3'-phosphoadenylyl sulfate. The N-linked (GlcNAc...) asparagine glycan is linked to N364. The 3'-phosphoadenylyl sulfate site is built by R392 and S400.

This sequence belongs to the sulfotransferase 1 family. As to quaternary structure, homodimer; disulfide-linked (Potential). The relevance of homodimerization is however unsure. May interact with phosphorylated proteins in resting B-cells, including HCK. A divalent metal cation is required as a cofactor. It depends on glutathione as a cofactor. Post-translationally, glycosylated. In terms of tissue distribution, expressed in B-cell-enriched tissues but not in fetal or adult thymus. Expressed in fetal and adult spleen, lymph node, tonsil, bone marrow and peripheral leukocytes. Not expressed in T-cells. In pro-B, pre-B, and mature B-cell lines, it colocalizes with RAG1.

It localises to the golgi apparatus membrane. It carries out the reaction dermatan 4'-sulfate + n 3'-phosphoadenylyl sulfate = dermatan 4',6'-bissulfate + n adenosine 3',5'-bisphosphate + n H(+). It catalyses the reaction chondroitin 4'-sulfate + n 3'-phosphoadenylyl sulfate = chondroitin 4',6'-bissulfate + n adenosine 3',5'-bisphosphate + n H(+). With respect to regulation, inhibited by phenyl beta-GalNAc(4,6-SO(4)). Functionally, sulfotransferase that transfers sulfate from 3'-phosphoadenosine 5'-phosphosulfate (PAPS) to the C-6 hydroxyl group of the GalNAc 4-sulfate residue of chondroitin sulfate A and forms chondroitin sulfate E containing GlcA-GalNAc(4,6-SO(4)) repeating units. It also transfers sulfate to a unique non-reducing terminal sequence, GalNAc(4SO4)-GlcA(2SO4)-GalNAc(6SO4), to yield a highly sulfated structure similar to the structure found in thrombomodulin chondroitin sulfate. May also act as a B-cell receptor involved in BCR ligation-mediated early activation that mediate regulatory signals key to B-cell development and/or regulation of B-cell-specific RAG expression; however such results are unclear in vivo. The sequence is that of Carbohydrate sulfotransferase 15 (CHST15) from Homo sapiens (Human).